An 80-amino-acid chain; its full sequence is Mu-conotoxin BuIIIC (80 aa).

The N-terminal stretch at 1–22 is a signal peptide; it reads MMSKLGVLLTICLLLFPLFALP. Residues 23–51 constitute a propeptide that is removed on maturation; it reads QDGDQPADRPAERMQDDLSSEQHPLFEKR. Intrachain disulfides connect cysteine 56–cysteine 70, cysteine 57–cysteine 76, and cysteine 66–cysteine 77. Cysteine amide is present on cysteine 77.

It belongs to the conotoxin M superfamily. As to expression, expressed by the venom duct.

Its subcellular location is the secreted. Its function is as follows. Mu-conotoxins block voltage-gated sodium channels. Extremely potent inhibitor of Nav1.4/SCN4A (96% inhibition at 1 uM). The inhibition is very slowly reversible. This is Mu-conotoxin BuIIIC from Conus bullatus (Bubble cone).